Here is a 328-residue protein sequence, read N- to C-terminus: Biotin synthase (328 aa).

Positions 53 to 282 (FHGNRVDLCA…ATTIRYAGGR (230 aa)) constitute a Radical SAM core domain. Positions 71, 75, and 78 each coordinate [4Fe-4S] cluster. [2Fe-2S] cluster-binding residues include Ser115, Cys147, Cys207, and Arg277.

Belongs to the radical SAM superfamily. Biotin synthase family. As to quaternary structure, homodimer. [4Fe-4S] cluster is required as a cofactor. [2Fe-2S] cluster serves as cofactor.

The catalysed reaction is (4R,5S)-dethiobiotin + (sulfur carrier)-SH + 2 reduced [2Fe-2S]-[ferredoxin] + 2 S-adenosyl-L-methionine = (sulfur carrier)-H + biotin + 2 5'-deoxyadenosine + 2 L-methionine + 2 oxidized [2Fe-2S]-[ferredoxin]. It functions in the pathway cofactor biosynthesis; biotin biosynthesis; biotin from 7,8-diaminononanoate: step 2/2. Its function is as follows. Catalyzes the conversion of dethiobiotin (DTB) to biotin by the insertion of a sulfur atom into dethiobiotin via a radical-based mechanism. The protein is Biotin synthase of Desulforudis audaxviator (strain MP104C).